A 160-amino-acid chain; its full sequence is Ureidoglycolate lyase (160 aa).

The protein belongs to the ureidoglycolate lyase family. Homodimer. The cofactor is Ni(2+).

It catalyses the reaction (S)-ureidoglycolate = urea + glyoxylate. It participates in nitrogen metabolism; (S)-allantoin degradation. In terms of biological role, catalyzes the catabolism of the allantoin degradation intermediate (S)-ureidoglycolate, generating urea and glyoxylate. Involved in the anaerobic utilization of allantoin as sole nitrogen source. Reinforces the induction of genes involved in the degradation of allantoin and glyoxylate by producing glyoxylate. This chain is Ureidoglycolate lyase, found in Escherichia coli (strain SMS-3-5 / SECEC).